Here is a 483-residue protein sequence, read N- to C-terminus: Serine hydroxymethyltransferase, cytosolic (483 aa).

Lys257 is modified (N6-(pyridoxal phosphate)lysine).

Belongs to the SHMT family. In terms of assembly, homotetramer. Identified in complex with ABRAXAS2 and the other subunits of the BRISC complex, at least composed of ABRAXAS2, BRCC3/BRCC36, BABAM2 and BABAM1/NBA1. The cofactor is pyridoxal 5'-phosphate.

It localises to the cytoplasm. The catalysed reaction is (6R)-5,10-methylene-5,6,7,8-tetrahydrofolate + glycine + H2O = (6S)-5,6,7,8-tetrahydrofolate + L-serine. Its pathway is one-carbon metabolism; tetrahydrofolate interconversion. Functionally, interconversion of serine and glycine. This Pongo abelii (Sumatran orangutan) protein is Serine hydroxymethyltransferase, cytosolic (SHMT1).